The primary structure comprises 515 residues: Maturase K (515 aa).

Belongs to the intron maturase 2 family. MatK subfamily.

It is found in the plastid. Its subcellular location is the chloroplast. In terms of biological role, usually encoded in the trnK tRNA gene intron. Probably assists in splicing its own and other chloroplast group II introns. The sequence is that of Maturase K from Pinus coulteri (Coulter pine).